A 407-amino-acid chain; its full sequence is Peptide chain release factor subunit 1 (407 aa).

The protein belongs to the eukaryotic release factor 1 family. In terms of assembly, heterodimer of two subunits, one of which binds GTP.

It is found in the cytoplasm. Directs the termination of nascent peptide synthesis (translation) in response to the termination codons UAA, UAG and UGA. This chain is Peptide chain release factor subunit 1 (prf1), found in Archaeoglobus fulgidus (strain ATCC 49558 / DSM 4304 / JCM 9628 / NBRC 100126 / VC-16).